The primary structure comprises 273 residues: Large ribosomal subunit protein uL2c (273 aa).

The segment at Met223–Lys273 is disordered.

It belongs to the universal ribosomal protein uL2 family. Part of the 50S ribosomal subunit.

It is found in the plastid. It localises to the chloroplast. This is Large ribosomal subunit protein uL2c (rpl2) from Calycanthus floridus var. glaucus (Eastern sweetshrub).